A 210-amino-acid chain; its full sequence is 23.6 kDa heat shock protein, mitochondrial (210 aa).

The N-terminal 31 residues, 1 to 31 (MASALALKRLLSSSIAPRSRSVLRPAVSSRL), are a transit peptide targeting the mitochondrion. Residues 100-210 (MGASGARRGW…RNDVRQIEIN (111 aa)) enclose the sHSP domain. The segment at 145–165 (GEGKNEEDGGEEGESGNRRFT) is disordered.

This sequence belongs to the small heat shock protein (HSP20) family. May form oligomeric structures.

Its subcellular location is the mitochondrion. The polypeptide is 23.6 kDa heat shock protein, mitochondrial (HSP23.6) (Arabidopsis thaliana (Mouse-ear cress)).